Here is a 298-residue protein sequence, read N- to C-terminus: Nucleotide-binding protein GK3066 (298 aa).

17 to 24 (GMSGAGKT) contributes to the ATP binding site. 68–71 (DLRS) serves as a coordination point for GTP.

This sequence belongs to the RapZ-like family.

Its function is as follows. Displays ATPase and GTPase activities. The polypeptide is Nucleotide-binding protein GK3066 (Geobacillus kaustophilus (strain HTA426)).